The chain runs to 341 residues: MIELNQVVKRYHTKDKDVLAVDNVNLNIETGSIFGVIGFSGAGKSTLIRMFNNLEEPTSGDIIIDGDNINKLSKAELRRKRQKVSMVFQHFNLLWSRTVLRNITFPLEIAGYSKTKANERAKELIDLVGLNGRENAYPSELSGGQKQRVGIARALANEPDVLLCDEATSALDPQTTDEILDLLLKIKERENLTIVIITHEMHVIRRVCDEVAVMESGRVIEQGKVTQVFENPQHEVTRRFVKDDLDDDFEESIKHLEPLDSDAYIVRLNFNGGNTTEPVVSYISKTHNIDINILEANIKNTRGGSVGFLVVHIPHIAETEFETFKEDLHQQHVNVEVVKHG.

One can recognise an ABC transporter domain in the interval 2 to 241 (IELNQVVKRY…PQHEVTRRFV (240 aa)). 38–45 (GFSGAGKS) serves as a coordination point for ATP.

It belongs to the ABC transporter superfamily. Methionine importer (TC 3.A.1.24) family. The complex is composed of two ATP-binding proteins (MetN), two transmembrane proteins (MetI) and a solute-binding protein (MetQ).

It localises to the cell membrane. It catalyses the reaction L-methionine(out) + ATP + H2O = L-methionine(in) + ADP + phosphate + H(+). It carries out the reaction D-methionine(out) + ATP + H2O = D-methionine(in) + ADP + phosphate + H(+). Functionally, part of the ABC transporter complex MetNIQ involved in methionine import. Responsible for energy coupling to the transport system. This chain is Methionine import ATP-binding protein MetN, found in Staphylococcus haemolyticus (strain JCSC1435).